A 525-amino-acid chain; its full sequence is GMP synthase [glutamine-hydrolyzing] (525 aa).

A Glutamine amidotransferase type-1 domain is found at 9 to 207 (RILILDFGSQ…VRDICQCEAL (199 aa)). The active-site Nucleophile is Cys86. Residues His181 and Glu183 contribute to the active site. Residues 208–400 (WTPAKIIDDA…LGLPYDMLYR (193 aa)) enclose the GMPS ATP-PPase domain. 235–241 (SGGVDSS) is an ATP binding site.

As to quaternary structure, homodimer.

The catalysed reaction is XMP + L-glutamine + ATP + H2O = GMP + L-glutamate + AMP + diphosphate + 2 H(+). The protein operates within purine metabolism; GMP biosynthesis; GMP from XMP (L-Gln route): step 1/1. Functionally, catalyzes the synthesis of GMP from XMP. The sequence is that of GMP synthase [glutamine-hydrolyzing] from Escherichia coli O17:K52:H18 (strain UMN026 / ExPEC).